A 265-amino-acid polypeptide reads, in one-letter code: Glutamate racemase (265 aa).

Residues 10–11 and 42–43 each bind substrate; these read DS and YG. Residue Cys73 is the Proton donor/acceptor of the active site. Residue 74-75 participates in substrate binding; the sequence is NT. Cys184 acts as the Proton donor/acceptor in catalysis. 185 to 186 contributes to the substrate binding site; the sequence is TH.

It belongs to the aspartate/glutamate racemases family.

It carries out the reaction L-glutamate = D-glutamate. The protein operates within cell wall biogenesis; peptidoglycan biosynthesis. Functionally, provides the (R)-glutamate required for cell wall biosynthesis. This is Glutamate racemase from Pediococcus pentosaceus (strain ATCC 25745 / CCUG 21536 / LMG 10740 / 183-1w).